Here is a 296-residue protein sequence, read N- to C-terminus: Polyadenylate-binding protein 2 (296 aa).

The interval 1 to 102 is disordered; sequence MAAVSSAASL…EEEPGELTGD (102 aa). Composition is skewed to gly residues over residues 19 to 31 and 71 to 82; these read LRGG…GGQD and GRGGSGGGGAGG. Residues 84-97 show a composition bias toward acidic residues; it reads EELEDEELEEEEPG. The stretch at 107–141 forms a coiled coil; the sequence is DPELEAIKARVREMEEEAEKLKELQNEVEKQMNMS. A necessary for homooligomerization region spans residues 146–296; it reads NAGPVIMSIE…ARVTSWYTPY (151 aa). The RRM domain maps to 163–240; the sequence is RSIYVGNVDY…RQIKVVPKRT (78 aa).

In terms of assembly, monomer and homooligomer. Binds RNA as a monomer and oligomerizes when bound to poly(A).

Its subcellular location is the nucleus. It is found in the cytoplasm. Involved in the 3'-end formation of mRNA precursors (pre-mRNA) by the addition of a poly(A) tail of 200-250 nt to the upstream cleavage product. Stimulates poly(A) polymerase (PAPOLA) conferring processivity on the poly(A) tail elongation reaction and also controls the poly(A) tail length. Increases the affinity of poly(A) polymerase for RNA. Binds to poly(A) and to poly(G) with high affinity. May protect the poly(A) tail from degradation. The sequence is that of Polyadenylate-binding protein 2 from Xenopus tropicalis (Western clawed frog).